The primary structure comprises 347 residues: Probable arabinogalactan endo-beta-1,4-galactanase A (347 aa).

The N-terminal stretch at 1 to 16 (MLFSYLLATLPLLANA) is a signal peptide. Glu150 acts as the Proton donor in catalysis. Glu260 functions as the Nucleophile in the catalytic mechanism.

The protein belongs to the glycosyl hydrolase 53 family.

Its subcellular location is the secreted. The catalysed reaction is The enzyme specifically hydrolyzes (1-&gt;4)-beta-D-galactosidic linkages in type I arabinogalactans.. Endogalactanase involved in the degradation of plant cell wall polysaccharides, and more particularly of hairy regions of pectin. This is Probable arabinogalactan endo-beta-1,4-galactanase A (galA) from Aspergillus oryzae (strain ATCC 42149 / RIB 40) (Yellow koji mold).